The chain runs to 580 residues: Alpha-thujene synthase TPS3, chloroplastic (580 aa).

The transit peptide at 1-26 (MALQLLTPSFSFQHSPSPHRLTTLRY) directs the protein to the chloroplast. (2E)-geranyl diphosphate is bound by residues arginine 296, aspartate 333, aspartate 337, arginine 473, and aspartate 476. Residues aspartate 333 and aspartate 337 each contribute to the Mg(2+) site. The DDXXD motif signature appears at 333–337 (DDVYD). Residues aspartate 476, threonine 480, and glutamate 484 each contribute to the Mg(2+) site.

It belongs to the terpene synthase family. Tpsb subfamily. Monomer. It depends on Mg(2+) as a cofactor. Mn(2+) serves as cofactor. Mostly expressed in developing and mature fruits, and, to a lower extent, in male leaves. Barely detectable in female leaves and shoots.

It localises to the plastid. The protein localises to the chloroplast. It carries out the reaction (2E)-geranyl diphosphate = alpha-thujene + diphosphate. The catalysed reaction is (2E)-geranyl diphosphate = (1R,5R)-sabinene + diphosphate. Its pathway is secondary metabolite biosynthesis; terpenoid biosynthesis. Its function is as follows. Monoterpene synthase (TPS) involved in the biosynthesis of monoterpene natural products used by traditional Chinese medicine to treat headache, inflammation and intoxication. Catalyzes the conversion of (2E)-geranyl diphosphate (GPP) into alpha-thujene and (1R,5R)-sabinene. The sequence is that of Alpha-thujene synthase TPS3, chloroplastic from Litsea cubeba (Aromatic litsea).